The sequence spans 334 residues: L-lactate dehydrogenase A chain (334 aa).

Residues 30–58 (GQVGMACAVSVLLKELADELALVDILEDK) and R100 contribute to the NAD(+) site. Substrate-binding residues include R107, N139, and R170. N139 contributes to the NAD(+) binding site. The active-site Proton acceptor is the H194. A substrate-binding site is contributed by T249.

Belongs to the LDH/MDH superfamily. LDH family. Homotetramer.

Its subcellular location is the cytoplasm. The catalysed reaction is (S)-lactate + NAD(+) = pyruvate + NADH + H(+). The protein operates within fermentation; pyruvate fermentation to lactate; (S)-lactate from pyruvate: step 1/1. In terms of biological role, interconverts simultaneously and stereospecifically pyruvate and lactate with concomitant interconversion of NADH and NAD(+). This Xenopus laevis (African clawed frog) protein is L-lactate dehydrogenase A chain (ldha).